Consider the following 535-residue polypeptide: Probable fucosyltransferase 4 (535 aa).

The Cytoplasmic segment spans residues 1 to 20; that stretch reads MYHIFQISGEVIKGLGLKTK. The helical; Signal-anchor for type II membrane protein transmembrane segment at 21-41 threads the bilayer; the sequence is ILITIVFSTLLILSVMLLSFS. Residues 42–535 lie on the Lumenal side of the membrane; that stretch reads NNFNNKLFAA…IWGLKLFDEL (494 aa). Residues asparagine 136, asparagine 226, asparagine 230, asparagine 377, and asparagine 409 are each glycosylated (N-linked (GlcNAc...) asparagine).

Belongs to the glycosyltransferase 37 family. As to expression, expressed in roots, stems, leaves, flowers, siliques and seedlings.

It localises to the golgi apparatus. The protein localises to the golgi stack membrane. It participates in protein modification; protein glycosylation. May be involved in cell wall biosynthesis. May act as a fucosyltransferase. The sequence is that of Probable fucosyltransferase 4 (FUT4) from Arabidopsis thaliana (Mouse-ear cress).